The sequence spans 869 residues: Phosphatidylethanolamine N-methyltransferase (869 aa).

Ser2 is subject to N-acetylserine. Residues 2-55 lie on the Lumenal side of the membrane; the sequence is SSCKTTLSEMVGSVTKDRGTINVEARTRSSNVTFKPPVTHDMVRSLFDPTLKKS. Residues 56-76 form a helical membrane-spanning segment; sequence LLEKCIALAIISNFFICYWVF. Over 77-86 the chain is Cytoplasmic; that stretch reads QRFGLQFTKY. A helical membrane pass occupies residues 87–107; that stretch reads FFLVQYLFWRIAYNLGIGLVL. At 108–187 the chain is on the lumenal side; it reads HYQSHYETLT…EINVWLIFRQ (80 aa). The helical transmembrane segment at 188 to 208 threads the bilayer; the sequence is FVDLILMQDFVTYIIYVYLSI. Residues 209–212 lie on the Cytoplasmic side of the membrane; the sequence is PYSW. The chain crosses the membrane as a helical span at residues 213-233; it reads VQIFNWRSLLGVILILFNIWV. The Lumenal segment spans residues 234–258; sequence KLDAHRVVKDYAWYWGDFFFLEESE. A helical transmembrane segment spans residues 259 to 279; sequence LIFDGVFNISPHPMYSIGYLG. At 280–291 the chain is on the cytoplasmic side; sequence YYGLSLICNDYK. Residues 292-310 form a helical membrane-spanning segment; that stretch reads VLLVSVFGHYSQFLFLKYV. Topologically, residues 311 to 362 are lumenal; the sequence is ENPHIERTYGDGTDSDSQMNSRIDDLISKENYDYSRPLINMGLSFNNFNKLR. A helical membrane pass occupies residues 363-383; that stretch reads FTDYFTIGTVAALMLGTIMNA. At 384–389 the chain is on the cytoplasmic side; that stretch reads RFINLN. A helical transmembrane segment spans residues 390 to 410; the sequence is YLFITVFVTKLVSWLFISTIL. At 411-439 the chain is on the lumenal side; sequence YKQSQSKWFTRLFLENGYTQVYSYEQWQF. The helical transmembrane segment at 440–460 threads the bilayer; that stretch reads IYNYYLVLTYTLMIIHTGLQI. The Cytoplasmic segment spans residues 461 to 463; the sequence is WSN. A helical transmembrane segment spans residues 464 to 484; sequence FSNINNSQLIFGLILVALQTW. At 485–534 the chain is on the lumenal side; that stretch reads CDKETRLAISDFGWFYGDFFLSNYISTRKLTSQGIYRYLNHPEAVLGVVG. Residues 535–555 form a helical membrane-spanning segment; that stretch reads VWGTVLMTNFAVTNIILAVLW. Residues 556–869 lie on the Cytoplasmic side of the membrane; that stretch reads TLTNFILVKF…DIKQTLDSLA (314 aa).

Belongs to the class VI-like SAM-binding methyltransferase superfamily. CHO2 family.

The protein resides in the endoplasmic reticulum membrane. The catalysed reaction is a 1,2-diacyl-sn-glycero-3-phosphoethanolamine + S-adenosyl-L-methionine = a 1,2-diacyl-sn-glycero-3-phospho-N-methylethanolamine + S-adenosyl-L-homocysteine + H(+). Its pathway is phospholipid metabolism; phosphatidylcholine biosynthesis. In terms of biological role, catalyzes the first step of the methylation pathway of phosphatidylcholine biosynthesis, the SAM-dependent methylation of phosphatidylethanolamine (PE) to phosphatidylmonomethylethanolamine (PMME). Preferentially converts di-C16:1 substrates. This is Phosphatidylethanolamine N-methyltransferase from Saccharomyces cerevisiae (strain ATCC 204508 / S288c) (Baker's yeast).